The following is a 449-amino-acid chain: Tubulin alpha chain (449 aa).

Glutamine 11, glutamate 71, serine 140, glycine 144, threonine 145, threonine 179, asparagine 206, and asparagine 228 together coordinate GTP. Glutamate 71 serves as a coordination point for Mg(2+). Glutamate 254 is a catalytic residue.

This sequence belongs to the tubulin family. As to quaternary structure, dimer of alpha and beta chains. A typical microtubule is a hollow water-filled tube with an outer diameter of 25 nm and an inner diameter of 15 nM. Alpha-beta heterodimers associate head-to-tail to form protofilaments running lengthwise along the microtubule wall with the beta-tubulin subunit facing the microtubule plus end conferring a structural polarity. Microtubules usually have 13 protofilaments but different protofilament numbers can be found in some organisms and specialized cells. Mg(2+) is required as a cofactor.

Its subcellular location is the cytoplasm. The protein localises to the cytoskeleton. It catalyses the reaction GTP + H2O = GDP + phosphate + H(+). In terms of biological role, tubulin is the major constituent of microtubules, a cylinder consisting of laterally associated linear protofilaments composed of alpha- and beta-tubulin heterodimers. Microtubules grow by the addition of GTP-tubulin dimers to the microtubule end, where a stabilizing cap forms. Below the cap, tubulin dimers are in GDP-bound state, owing to GTPase activity of alpha-tubulin. In Gibberella zeae (strain ATCC MYA-4620 / CBS 123657 / FGSC 9075 / NRRL 31084 / PH-1) (Wheat head blight fungus), this protein is Tubulin alpha chain (TUB1).